Here is a 432-residue protein sequence, read N- to C-terminus: Putative D-alanyl-D-alanine carboxypeptidase (432 aa).

The helical; Signal-anchor transmembrane segment at A7 to L25 threads the bilayer.

The protein belongs to the peptidase S12 family. YfeW subfamily.

It localises to the cell inner membrane. The catalysed reaction is Preferential cleavage: (Ac)2-L-Lys-D-Ala-|-D-Ala. Also transpeptidation of peptidyl-alanyl moieties that are N-acyl substituents of D-alanine.. This chain is Putative D-alanyl-D-alanine carboxypeptidase, found in Salmonella heidelberg (strain SL476).